A 122-amino-acid chain; its full sequence is Large ribosomal subunit protein uL14 (122 aa).

The protein belongs to the universal ribosomal protein uL14 family. In terms of assembly, part of the 50S ribosomal subunit. Forms a cluster with proteins L3 and L19. In the 70S ribosome, L14 and L19 interact and together make contacts with the 16S rRNA in bridges B5 and B8.

Its function is as follows. Binds to 23S rRNA. Forms part of two intersubunit bridges in the 70S ribosome. The polypeptide is Large ribosomal subunit protein uL14 (Paraburkholderia phymatum (strain DSM 17167 / CIP 108236 / LMG 21445 / STM815) (Burkholderia phymatum)).